The following is a 484-amino-acid chain: Hexokinase-2 (484 aa).

Positions 21–467 constitute a Hexokinase domain; the sequence is PQLLEALKPI…SGVGAAVIAA (447 aa). A hexokinase small subdomain region spans residues 75 to 208; sequence TGKETGSYLA…GVPIDVVALI (134 aa). Positions 209-456 are hexokinase large subdomain; that stretch reads NDTTGTLVAS…DPIIIVPAED (248 aa).

Belongs to the hexokinase family. In terms of assembly, monomer.

The protein resides in the cytoplasm. It carries out the reaction a D-hexose + ATP = a D-hexose 6-phosphate + ADP + H(+). The catalysed reaction is D-fructose + ATP = D-fructose 6-phosphate + ADP + H(+). It catalyses the reaction D-glucose + ATP = D-glucose 6-phosphate + ADP + H(+). It functions in the pathway carbohydrate metabolism; hexose metabolism. It participates in carbohydrate degradation; glycolysis; D-glyceraldehyde 3-phosphate and glycerone phosphate from D-glucose: step 1/4. In terms of biological role, catalyzes the phosphorylation of hexose, such as D-glucose and D-fructose, to hexose 6-phosphate (D-glucose 6-phosphate and D-fructose 6-phosphate, respectively). Mediates the initial step of glycolysis by catalyzing phosphorylation of D-glucose to D-glucose 6-phosphate. This is Hexokinase-2 (HXK2) from Candida albicans (strain SC5314 / ATCC MYA-2876) (Yeast).